The chain runs to 393 residues: NADH-quinone oxidoreductase subunit D 2 (393 aa).

The protein belongs to the complex I 49 kDa subunit family. NDH-1 is composed of 14 different subunits. Subunits NuoB, C, D, E, F, and G constitute the peripheral sector of the complex.

The protein localises to the cell inner membrane. It carries out the reaction a quinone + NADH + 5 H(+)(in) = a quinol + NAD(+) + 4 H(+)(out). Functionally, NDH-1 shuttles electrons from NADH, via FMN and iron-sulfur (Fe-S) centers, to quinones in the respiratory chain. The immediate electron acceptor for the enzyme in this species is believed to be a menaquinone. Couples the redox reaction to proton translocation (for every two electrons transferred, four hydrogen ions are translocated across the cytoplasmic membrane), and thus conserves the redox energy in a proton gradient. This chain is NADH-quinone oxidoreductase subunit D 2, found in Cytophaga hutchinsonii (strain ATCC 33406 / DSM 1761 / CIP 103989 / NBRC 15051 / NCIMB 9469 / D465).